The following is a 327-amino-acid chain: Phenylalanine--tRNA ligase alpha subunit (327 aa).

Position 252 (Glu-252) interacts with Mg(2+).

Belongs to the class-II aminoacyl-tRNA synthetase family. Phe-tRNA synthetase alpha subunit type 1 subfamily. As to quaternary structure, tetramer of two alpha and two beta subunits. Mg(2+) is required as a cofactor.

It localises to the cytoplasm. It catalyses the reaction tRNA(Phe) + L-phenylalanine + ATP = L-phenylalanyl-tRNA(Phe) + AMP + diphosphate + H(+). This is Phenylalanine--tRNA ligase alpha subunit from Vibrio campbellii (strain ATCC BAA-1116).